Here is a 386-residue protein sequence, read N- to C-terminus: uncharacterized protein (386 aa).

It belongs to the mimivirus L17x/L18x family.

This is an uncharacterized protein from Acanthamoeba polyphaga mimivirus (APMV).